Reading from the N-terminus, the 461-residue chain is UDP-N-acetylmuramate--L-alanine ligase (461 aa).

G111 to T117 serves as a coordination point for ATP.

The protein belongs to the MurCDEF family.

It localises to the cytoplasm. The catalysed reaction is UDP-N-acetyl-alpha-D-muramate + L-alanine + ATP = UDP-N-acetyl-alpha-D-muramoyl-L-alanine + ADP + phosphate + H(+). The protein operates within cell wall biogenesis; peptidoglycan biosynthesis. Its function is as follows. Cell wall formation. This chain is UDP-N-acetylmuramate--L-alanine ligase, found in Pelotomaculum thermopropionicum (strain DSM 13744 / JCM 10971 / SI).